A 562-amino-acid chain; its full sequence is Probable malate:quinone oxidoreductase (562 aa).

Positions 535-562 are disordered; sequence SATPADPTIAPKNQHSTTYNANSEMQAL. Over residues 545-562 the composition is skewed to polar residues; it reads PKNQHSTTYNANSEMQAL.

Belongs to the MQO family. FAD serves as cofactor.

The catalysed reaction is (S)-malate + a quinone = a quinol + oxaloacetate. The protein operates within carbohydrate metabolism; tricarboxylic acid cycle; oxaloacetate from (S)-malate (quinone route): step 1/1. The protein is Probable malate:quinone oxidoreductase of Xylella fastidiosa (strain M23).